A 247-amino-acid polypeptide reads, in one-letter code: Probable transcriptional regulatory protein Spro_2779 (247 aa).

This sequence belongs to the TACO1 family.

Its subcellular location is the cytoplasm. This Serratia proteamaculans (strain 568) protein is Probable transcriptional regulatory protein Spro_2779.